We begin with the raw amino-acid sequence, 167 residues long: Ubiquitin-fold modifier-conjugating enzyme 1 (167 aa).

The active-site Glycyl thioester intermediate is the cysteine 116. Lysine 122 is covalently cross-linked (Glycyl lysine isopeptide (Lys-Gly) (interchain with G-Cter in UFM1)).

The protein belongs to the ubiquitin-conjugating enzyme family. UFC1 subfamily. In terms of assembly, interacts with UBA5 (via C-terminus). Interacts with UFL1. Interacts with UFM1. Interacts with KIRREL3. Ufmylated at Lys-122. Deufmylated by UFSP1.

E2-like enzyme which specifically catalyzes the second step in ufmylation. Accepts the ubiquitin-like modifier UFM1 from the E1 enzyme UBA5 and forms an intermediate with UFM1 via a thioester linkage. Ufmylation is involved in various processes, such as ribosome recycling, response to DNA damage, interferon response or reticulophagy (also called ER-phagy). In Rattus norvegicus (Rat), this protein is Ubiquitin-fold modifier-conjugating enzyme 1.